The sequence spans 378 residues: D-alanine--D-alanine ligase (378 aa).

Residues 141–347 (KKLLTLNGIR…YSELIDQLIQ (207 aa)) enclose the ATP-grasp domain. Residue 171–226 (AEELGETLFVKPARQGSSVGIHKVRNEEEYNAALEDGFKYDYKILVEEAIKNPREV) coordinates ATP. Mg(2+) contacts are provided by Asp-301, Glu-314, and Asn-316.

It belongs to the D-alanine--D-alanine ligase family. The cofactor is Mg(2+). Requires Mn(2+) as cofactor.

It is found in the cytoplasm. The enzyme catalyses 2 D-alanine + ATP = D-alanyl-D-alanine + ADP + phosphate + H(+). It functions in the pathway cell wall biogenesis; peptidoglycan biosynthesis. In terms of biological role, cell wall formation. In Ligilactobacillus salivarius (strain UCC118) (Lactobacillus salivarius), this protein is D-alanine--D-alanine ligase.